The chain runs to 340 residues: ATPase GET3 (340 aa).

35 to 42 (KGGVGKTT) contributes to the ATP binding site. Asp-64 is a catalytic residue. Glu-245 and Asn-272 together coordinate ATP. The Zn(2+) site is built by Cys-283 and Cys-286.

Belongs to the arsA ATPase family. Homodimer.

The protein localises to the cytoplasm. The protein resides in the endoplasmic reticulum. Its function is as follows. ATPase required for the post-translational delivery of tail-anchored (TA) proteins to the endoplasmic reticulum. Recognizes and selectively binds the transmembrane domain of TA proteins in the cytosol. This complex then targets to the endoplasmic reticulum by membrane-bound receptors, where the tail-anchored protein is released for insertion. This process is regulated by ATP binding and hydrolysis. ATP binding drives the homodimer towards the closed dimer state, facilitating recognition of newly synthesized TA membrane proteins. ATP hydrolysis is required for insertion. Subsequently, the homodimer reverts towards the open dimer state, lowering its affinity for the membrane-bound receptor, and returning it to the cytosol to initiate a new round of targeting. The polypeptide is ATPase GET3 (Chaetomium globosum (strain ATCC 6205 / CBS 148.51 / DSM 1962 / NBRC 6347 / NRRL 1970) (Soil fungus)).